We begin with the raw amino-acid sequence, 560 residues long: MNNHTDALTKQVFTIVSELYAYGIREVVISPGSRSTPLAIAIEAHPKLKSWIHPDERSAAFFAMGLMKGSEKPVAILCTSGSAAANYTPAISESSLSHLPLVVLTSDRPHELRGIGAPQAINQTNMFANYVQYQFDFPIAEKNDNEDIMANTIKFQLQKASQFLYGPHRGPIHLNLPFREPLTPNTEKVEWLTSDTKILPHYQKTTSLNEISAMMKKRKGLIIVGDMQHQDVDQILTFSTIHDMPILADPLSQLRREHHPNVVTTYDLLLRSGLELEADFVIRVGKPVISKKLNQWLKVTEAFQILVQNNDRPDAFPITPHVSYEMSANDFFRQLSEMPTVERKQWLEKWQTVEKHAIVEIKDHLRTATDEAAYVGNVLDKLTKDDAIFVSNSMPIRDVDNLFIDCEAEVFANRGANGIDGVTSTALGMAVHKKITLLIGDLAFYHDMNGLLMSKLNDIQLNIVLLNNDGGGIFSYLPQKNEADAYFERLFGTPTGLNFEHTALLYDFAFDRFDTIEAFKYADLSQFGSHIYEIMTHREDNKQQHLKLYKKLSDIIDVTL.

The protein belongs to the TPP enzyme family. MenD subfamily. Homodimer. Requires Mg(2+) as cofactor. Mn(2+) is required as a cofactor. The cofactor is thiamine diphosphate.

The enzyme catalyses isochorismate + 2-oxoglutarate + H(+) = 5-enolpyruvoyl-6-hydroxy-2-succinyl-cyclohex-3-ene-1-carboxylate + CO2. It participates in quinol/quinone metabolism; 1,4-dihydroxy-2-naphthoate biosynthesis; 1,4-dihydroxy-2-naphthoate from chorismate: step 2/7. Its pathway is quinol/quinone metabolism; menaquinone biosynthesis. In terms of biological role, catalyzes the thiamine diphosphate-dependent decarboxylation of 2-oxoglutarate and the subsequent addition of the resulting succinic semialdehyde-thiamine pyrophosphate anion to isochorismate to yield 2-succinyl-5-enolpyruvyl-6-hydroxy-3-cyclohexene-1-carboxylate (SEPHCHC). In Staphylococcus saprophyticus subsp. saprophyticus (strain ATCC 15305 / DSM 20229 / NCIMB 8711 / NCTC 7292 / S-41), this protein is 2-succinyl-5-enolpyruvyl-6-hydroxy-3-cyclohexene-1-carboxylate synthase.